We begin with the raw amino-acid sequence, 152 residues long: ESAT-6 secretion machinery protein EssA (152 aa).

The Cytoplasmic segment spans residues 1 to 114 (MLMNSVIALT…PYIQNKQEKK (114 aa)). A disordered region spans residues 62 to 83 (ERQQQIKNDMFQNQASHSTRLN). The span at 66-80 (QIKNDMFQNQASHST) shows a compositional bias: polar residues. Residues 115-135 (IFPYILMSVGAFLTLGFVIFS) form a helical membrane-spanning segment. At 136–152 (IHKGRRTKNESARKSNI) the chain is on the extracellular side.

This sequence belongs to the EssA family.

Its subcellular location is the cell membrane. Its function is as follows. Component of the ESAT-6 secretion system (Ess). Required for the secretion of EsxA and EsxB. The protein is ESAT-6 secretion machinery protein EssA of Staphylococcus aureus (strain COL).